A 740-amino-acid chain; its full sequence is Autotransporter adhesin BtaE (740 aa).

A signal peptide spans 1 to 11 (MFGLSVNHAYA). Residues 12–647 (GPGIFINDGT…LQTLDQANAY (636 aa)) are surface exposed passenger domain. The outer membrane translocation of the passenger domain stretch occupies residues 648 to 686 (TDKKFGKLNEDIVATRIEARQAAAIGLAAASLRYDDRPG). A run of 4 beta stranded transmembrane segments spans residues 686-696 (GKISAAIGGGF), 700-710 (EGAVALGLGHT), 719-725 (NLSAATS), and 728-739 (NWGMGAGFSYTF). The translocator domain stretch occupies residues 687–740 (KISAAIGGGFWRGEGAVALGLGHTSEDQRMRSNLSAATSGGNWGMGAGFSYTFN).

It belongs to the autotransporter-2 (AT-2) (TC 1.B.40) family. In terms of assembly, homotrimer.

It is found in the cell surface. Its subcellular location is the cell outer membrane. Binds to hyaluronic acid and epithelial cells, and is required for full virulence in the mouse model. This is Autotransporter adhesin BtaE from Brucella suis biovar 1 (strain 1330).